A 473-amino-acid chain; its full sequence is ATP-dependent 6-phosphofructokinase 1 (473 aa).

At S71 the chain carries Phosphoserine. ATP is bound by residues G102, 165–166 (RG), and 190–193 (GDGS). D191 is a binding site for Mg(2+). Residues 219–221 (TID), 264–266 (MGR), E320, and 376–379 (YMIR) each bind substrate. D221 functions as the Proton acceptor in the catalytic mechanism.

The protein belongs to the phosphofructokinase type A (PFKA) family. PPi-dependent PFK group II subfamily. Atypical ATP-dependent clade 'X' sub-subfamily. In terms of assembly, homotetramer. It depends on Mg(2+) as a cofactor. As to expression, expressed in roots, leaves, stems and flowers.

The protein resides in the cytoplasm. It carries out the reaction beta-D-fructose 6-phosphate + ATP = beta-D-fructose 1,6-bisphosphate + ADP + H(+). It functions in the pathway carbohydrate degradation; glycolysis; D-glyceraldehyde 3-phosphate and glycerone phosphate from D-glucose: step 3/4. With respect to regulation, allosterically activated by AMP. Functionally, catalyzes the phosphorylation of D-fructose 6-phosphate to fructose 1,6-bisphosphate by ATP, the first committing step of glycolysis. This is ATP-dependent 6-phosphofructokinase 1 from Arabidopsis thaliana (Mouse-ear cress).